The chain runs to 209 residues: Imidazole glycerol phosphate synthase subunit HisH (209 aa).

Residues 3-209 (SVAVIDYGMG…ANFLTWNGVS (207 aa)) form the Glutamine amidotransferase type-1 domain. C82 acts as the Nucleophile in catalysis. Catalysis depends on residues H187 and E189.

Heterodimer of HisH and HisF.

The protein localises to the cytoplasm. It carries out the reaction 5-[(5-phospho-1-deoxy-D-ribulos-1-ylimino)methylamino]-1-(5-phospho-beta-D-ribosyl)imidazole-4-carboxamide + L-glutamine = D-erythro-1-(imidazol-4-yl)glycerol 3-phosphate + 5-amino-1-(5-phospho-beta-D-ribosyl)imidazole-4-carboxamide + L-glutamate + H(+). It catalyses the reaction L-glutamine + H2O = L-glutamate + NH4(+). Its pathway is amino-acid biosynthesis; L-histidine biosynthesis; L-histidine from 5-phospho-alpha-D-ribose 1-diphosphate: step 5/9. IGPS catalyzes the conversion of PRFAR and glutamine to IGP, AICAR and glutamate. The HisH subunit catalyzes the hydrolysis of glutamine to glutamate and ammonia as part of the synthesis of IGP and AICAR. The resulting ammonia molecule is channeled to the active site of HisF. This Nitrosococcus oceani (strain ATCC 19707 / BCRC 17464 / JCM 30415 / NCIMB 11848 / C-107) protein is Imidazole glycerol phosphate synthase subunit HisH.